The sequence spans 200 residues: Holliday junction branch migration complex subunit RuvA (200 aa).

The domain I stretch occupies residues 1-65 (MYEYIKGTLT…ETEHVLYGFS (65 aa)). A domain II region spans residues 66-144 (SRAERECFRL…TLMPLYLEEP (79 aa)). Positions 145–149 (VVPSS) are flexible linker. Residues 150–200 (TANSSFKEGIGALMNLGFSRLAADRMMTEAVKELSEEASVAELLPIALRKS) are domain III.

It belongs to the RuvA family. In terms of assembly, homotetramer. Forms an RuvA(8)-RuvB(12)-Holliday junction (HJ) complex. HJ DNA is sandwiched between 2 RuvA tetramers; dsDNA enters through RuvA and exits via RuvB. An RuvB hexamer assembles on each DNA strand where it exits the tetramer. Each RuvB hexamer is contacted by two RuvA subunits (via domain III) on 2 adjacent RuvB subunits; this complex drives branch migration. In the full resolvosome a probable DNA-RuvA(4)-RuvB(12)-RuvC(2) complex forms which resolves the HJ.

The protein resides in the cytoplasm. Its function is as follows. The RuvA-RuvB-RuvC complex processes Holliday junction (HJ) DNA during genetic recombination and DNA repair, while the RuvA-RuvB complex plays an important role in the rescue of blocked DNA replication forks via replication fork reversal (RFR). RuvA specifically binds to HJ cruciform DNA, conferring on it an open structure. The RuvB hexamer acts as an ATP-dependent pump, pulling dsDNA into and through the RuvAB complex. HJ branch migration allows RuvC to scan DNA until it finds its consensus sequence, where it cleaves and resolves the cruciform DNA. The chain is Holliday junction branch migration complex subunit RuvA from Chlamydia trachomatis serovar L2 (strain ATCC VR-902B / DSM 19102 / 434/Bu).